The sequence spans 291 residues: Glycine--tRNA ligase alpha subunit (291 aa).

It belongs to the class-II aminoacyl-tRNA synthetase family. Tetramer of two alpha and two beta subunits.

It is found in the cytoplasm. It carries out the reaction tRNA(Gly) + glycine + ATP = glycyl-tRNA(Gly) + AMP + diphosphate. This is Glycine--tRNA ligase alpha subunit from Geobacter metallireducens (strain ATCC 53774 / DSM 7210 / GS-15).